Consider the following 455-residue polypeptide: Golgi pH regulator (455 aa).

Transmembrane regions (helical) follow at residues 5 to 25 (ADSVLMVISQLLFFGFGWLFF) and 46 to 66 (VTFAFSCTMFELIIFEILGLL). A glycan (N-linked (GlcNAc...) asparagine) is linked at N67. Transmembrane regions (helical) follow at residues 79–99 (LCVILLVLVFVVPFYIGYFVV), 111–131 (LFSCTIWLTFMYFFWKLGDPF), and 150–170 (VGVIGVTLMALLSGFGAVNCP). N-linked (GlcNAc...) asparagine glycosylation occurs at N180. Helical transmembrane passes span 290 to 310 (GYFFSIYCVWKIFMATINIVF), 343 to 363 (ISFILVGIIIVTSIRGLLITL), 378 to 398 (VIVLLLAQIMGMYFVSSVLLI), and 425 to 445 (WFDVIFLVSALSSILFLYLAH).

It belongs to the Golgi pH regulator (TC 1.A.38) family. In terms of assembly, homotrimer.

Its subcellular location is the golgi apparatus membrane. The enzyme catalyses iodide(out) = iodide(in). It catalyses the reaction chloride(in) = chloride(out). It carries out the reaction bromide(in) = bromide(out). The catalysed reaction is fluoride(in) = fluoride(out). Voltage-gated channel that enables the transfer of anions such as iodide, chloride, bromide and fluoride which may function in counter-ion conductance and participates in Golgi acidification. This chain is Golgi pH regulator (gpr89-b), found in Xenopus laevis (African clawed frog).